The primary structure comprises 598 residues: Glutamyl-tRNA(Gln) amidotransferase subunit E (598 aa).

It belongs to the GatB/GatE family. GatE subfamily. Heterodimer of GatD and GatE.

The catalysed reaction is L-glutamyl-tRNA(Gln) + L-glutamine + ATP + H2O = L-glutaminyl-tRNA(Gln) + L-glutamate + ADP + phosphate + H(+). Functionally, allows the formation of correctly charged Gln-tRNA(Gln) through the transamidation of misacylated Glu-tRNA(Gln) in organisms which lack glutaminyl-tRNA synthetase. The reaction takes place in the presence of glutamine and ATP through an activated gamma-phospho-Glu-tRNA(Gln). The GatDE system is specific for glutamate and does not act on aspartate. In Thermoplasma volcanium (strain ATCC 51530 / DSM 4299 / JCM 9571 / NBRC 15438 / GSS1), this protein is Glutamyl-tRNA(Gln) amidotransferase subunit E.